The primary structure comprises 141 residues: Nucleoside diphosphate kinase (141 aa).

ATP is bound by residues K11, F59, R87, T93, R104, and N114. The active-site Pros-phosphohistidine intermediate is H117.

The protein belongs to the NDK family. In terms of assembly, homotetramer. It depends on Mg(2+) as a cofactor.

Its subcellular location is the cytoplasm. The enzyme catalyses a 2'-deoxyribonucleoside 5'-diphosphate + ATP = a 2'-deoxyribonucleoside 5'-triphosphate + ADP. It carries out the reaction a ribonucleoside 5'-diphosphate + ATP = a ribonucleoside 5'-triphosphate + ADP. Functionally, major role in the synthesis of nucleoside triphosphates other than ATP. The ATP gamma phosphate is transferred to the NDP beta phosphate via a ping-pong mechanism, using a phosphorylated active-site intermediate. This Vibrio campbellii (strain ATCC BAA-1116) protein is Nucleoside diphosphate kinase.